The primary structure comprises 413 residues: Amino acid transporter AVT3B (413 aa).

At 1-27 the chain is on the cytoplasmic side; that stretch reads MGLEEQGRAREDTPLLGKGRPLSSKFK. A helical membrane pass occupies residues 28-48; that stretch reads TFANVFIAIVGAGVLGLPYAF. Residues 49–54 are Vacuolar-facing; sequence KRTGWL. The helical transmembrane segment at 55-75 threads the bilayer; sequence MGLLTLFSVAALINHCMMLLV. At 76–103 the chain is on the cytoplasmic side; it reads HIRRKLGVSNIGSFGDLGFAACGNLGRF. The helical transmembrane segment at 104–124 threads the bilayer; the sequence is VVDILIILSQAGFCVGYLIFI. The Vacuolar segment spans residues 125–145; it reads GNTLANLSKPTKSTTLMSLRH. A helical membrane pass occupies residues 146–166; it reads LMGVSPKSLYIWGCFPFQLGL. The Cytoplasmic portion of the chain corresponds to 167 to 174; sequence NSIKTLTH. Residues 175-195 traverse the membrane as a helical segment; it reads LAPLSIFADVVDLGAMAVVIV. The Vacuolar segment spans residues 196-207; sequence EDIKITVVQRPQ. Residues 208-228 form a helical membrane-spanning segment; sequence VVAFGGMSVFFYGMGVAVYAF. Residues 229-249 are Cytoplasmic-facing; it reads EGVGMVLPLESETKDKDKFGK. A helical transmembrane segment spans residues 250 to 270; sequence VLALSMLFIAVMYGSFGVLGY. The Vacuolar segment spans residues 271–288; sequence MAFGDDTMDIITANLGAG. The helical transmembrane segment at 289–309 threads the bilayer; it reads VVSSLVQLGLCINLFFTFPLM. Residues 310–331 are Cytoplasmic-facing; sequence MNPVFEIVERRFWSGMYCVWLR. The helical transmembrane segment at 332 to 352 threads the bilayer; that stretch reads WLLVLAVTLVALLVPNFADFL. At 353–355 the chain is on the vacuolar side; the sequence is SLV. A helical transmembrane segment spans residues 356 to 376; it reads GSSVCCALGFVLPSLFHLMVF. Topologically, residues 377 to 390 are cytoplasmic; that stretch reads KDEMEWKQRALDVG. Residues 391 to 411 form a helical membrane-spanning segment; sequence ILLLGVILGVSGTWSSLTEIF. At 412–413 the chain is on the vacuolar side; it reads QE.

This sequence belongs to the amino acid/polyamine transporter 2 family. Amino acid/auxin permease (AAAP) (TC 2.A.18.8) subfamily. In terms of tissue distribution, ubiquitous.

The protein resides in the vacuole membrane. Its function is as follows. Translocates preferentially neutral amino acids from the vacuole to the cytoplasm. The protein is Amino acid transporter AVT3B of Arabidopsis thaliana (Mouse-ear cress).